Reading from the N-terminus, the 292-residue chain is [LysW]-aminoadipate kinase (292 aa).

Residues Arg89 and Asn193 each coordinate substrate.

The protein belongs to the acetylglutamate kinase family. LysZ subfamily.

Its subcellular location is the cytoplasm. It catalyses the reaction [amino-group carrier protein]-C-terminal-N-(1,4-dicarboxybutan-1-yl)-L-glutamine + ATP = [amino-group carrier protein]-C-terminal-N-(1-carboxy-5-phosphooxy-5-oxopentan-1-yl)-L-glutamine + ADP. It participates in amino-acid biosynthesis; L-lysine biosynthesis via AAA pathway; L-lysine from L-alpha-aminoadipate (Thermus route): step 2/5. Catalyzes the phosphorylation of LysW-gamma-alpha-aminoadipate. This Deinococcus radiodurans (strain ATCC 13939 / DSM 20539 / JCM 16871 / CCUG 27074 / LMG 4051 / NBRC 15346 / NCIMB 9279 / VKM B-1422 / R1) protein is [LysW]-aminoadipate kinase.